Reading from the N-terminus, the 137-residue chain is Small ribosomal subunit protein uS12 (137 aa).

Residues 1 to 23 (MPTINQLVRKPRKSNATKSKSPA) are disordered. Residue Asp-102 is modified to 3-methylthioaspartic acid.

Belongs to the universal ribosomal protein uS12 family. Part of the 30S ribosomal subunit. Contacts proteins S8 and S17. May interact with IF1 in the 30S initiation complex.

With S4 and S5 plays an important role in translational accuracy. In terms of biological role, interacts with and stabilizes bases of the 16S rRNA that are involved in tRNA selection in the A site and with the mRNA backbone. Located at the interface of the 30S and 50S subunits, it traverses the body of the 30S subunit contacting proteins on the other side and probably holding the rRNA structure together. The combined cluster of proteins S8, S12 and S17 appears to hold together the shoulder and platform of the 30S subunit. This Leuconostoc citreum (strain KM20) protein is Small ribosomal subunit protein uS12.